Reading from the N-terminus, the 104-residue chain is Nucleoid-associated protein Bsph_0039 (104 aa).

Positions 1-12 are enriched in low complexity; it reads MRGMGNMQGMMK. Positions 1-22 are disordered; the sequence is MRGMGNMQGMMKKMQKMQKEMM.

This sequence belongs to the YbaB/EbfC family. As to quaternary structure, homodimer.

It localises to the cytoplasm. It is found in the nucleoid. Functionally, binds to DNA and alters its conformation. May be involved in regulation of gene expression, nucleoid organization and DNA protection. The polypeptide is Nucleoid-associated protein Bsph_0039 (Lysinibacillus sphaericus (strain C3-41)).